The chain runs to 369 residues: Anhydro-N-acetylmuramic acid kinase (369 aa).

12–19 (GTSMDGVD) contributes to the ATP binding site.

This sequence belongs to the anhydro-N-acetylmuramic acid kinase family.

The enzyme catalyses 1,6-anhydro-N-acetyl-beta-muramate + ATP + H2O = N-acetyl-D-muramate 6-phosphate + ADP + H(+). It functions in the pathway amino-sugar metabolism; 1,6-anhydro-N-acetylmuramate degradation. The protein operates within cell wall biogenesis; peptidoglycan recycling. Catalyzes the specific phosphorylation of 1,6-anhydro-N-acetylmuramic acid (anhMurNAc) with the simultaneous cleavage of the 1,6-anhydro ring, generating MurNAc-6-P. Is required for the utilization of anhMurNAc either imported from the medium or derived from its own cell wall murein, and thus plays a role in cell wall recycling. The protein is Anhydro-N-acetylmuramic acid kinase of Shewanella pealeana (strain ATCC 700345 / ANG-SQ1).